Here is a 98-residue protein sequence, read N- to C-terminus: NADH-ubiquinone oxidoreductase chain 4L (98 aa).

The next 3 membrane-spanning stretches (helical) occupy residues M1–M21, S29–L49, and I61–V81.

It belongs to the complex I subunit 4L family. As to quaternary structure, core subunit of respiratory chain NADH dehydrogenase (Complex I) which is composed of 45 different subunits.

Its subcellular location is the mitochondrion inner membrane. It carries out the reaction a ubiquinone + NADH + 5 H(+)(in) = a ubiquinol + NAD(+) + 4 H(+)(out). Functionally, core subunit of the mitochondrial membrane respiratory chain NADH dehydrogenase (Complex I) which catalyzes electron transfer from NADH through the respiratory chain, using ubiquinone as an electron acceptor. Part of the enzyme membrane arm which is embedded in the lipid bilayer and involved in proton translocation. The chain is NADH-ubiquinone oxidoreductase chain 4L (MT-ND4L) from Acinonyx jubatus (Cheetah).